Reading from the N-terminus, the 198-residue chain is Inosine triphosphate pyrophosphatase (198 aa).

Alanine 2 carries the N-acetylalanine modification. 14–19 contributes to the ITP binding site; that stretch reads TGNAKK. Glutamate 44 serves as a coordination point for Mg(2+). ITP-binding positions include lysine 56, 72–73, and lysine 89; that span reads DT. The residue at position 146 (serine 146) is a Phosphoserine. ITP is bound by residues 149–152, lysine 172, and 177–178; these read FGWD and HR.

This sequence belongs to the HAM1 NTPase family. Homodimer. Mg(2+) serves as cofactor. It depends on Mn(2+) as a cofactor.

Its subcellular location is the cytoplasm. The catalysed reaction is ITP + H2O = IMP + diphosphate + H(+). It catalyses the reaction dITP + H2O = dIMP + diphosphate + H(+). It carries out the reaction XTP + H2O = XMP + diphosphate + H(+). The enzyme catalyses N(6)-hydroxy-dATP + H2O = N(6)-hydroxy-dAMP + diphosphate + H(+). Its function is as follows. Pyrophosphatase that hydrolyzes the non-canonical purine nucleotides inosine triphosphate (ITP), deoxyinosine triphosphate (dITP) as well as 2'-deoxy-N-6-hydroxylaminopurine triphosphate (dHAPTP) and xanthosine 5'-triphosphate (XTP) to their respective monophosphate derivatives. The enzyme does not distinguish between the deoxy- and ribose forms. Probably excludes non-canonical purines from RNA and DNA precursor pools, thus preventing their incorporation into RNA and DNA and avoiding chromosomal lesions. The sequence is that of Inosine triphosphate pyrophosphatase (Itpa) from Rattus norvegicus (Rat).